The chain runs to 332 residues: Arrestin domain-containing protein 5 (332 aa).

Residues serine 311–asparagine 332 form a disordered region.

It belongs to the arrestin family.

It is found in the membrane. Its function is as follows. Plays an essential role in spermatogenesis. May be involved in the anchoring of the sperm head to the tail during spermatogenesis by affecting SEC22A-mediated SUN5 and NDC1 transport and localization. The protein is Arrestin domain-containing protein 5 (ARRDC5) of Bos taurus (Bovine).